Here is a 99-residue protein sequence, read N- to C-terminus: Large ribosomal subunit protein eL21 (99 aa).

Positions 1–14 are enriched in polar residues; that stretch reads MPNSNGPLSNSGGK. The segment at 1 to 38 is disordered; it reads MPNSNGPLSNSGGKLQNDPRDRGTSPPQRAIADYDDGE.

Belongs to the eukaryotic ribosomal protein eL21 family.

The chain is Large ribosomal subunit protein eL21 from Halobacterium salinarum (strain ATCC 29341 / DSM 671 / R1).